The chain runs to 259 residues: Gasdermin bGSDM (259 aa).

The S-palmitoyl cysteine moiety is linked to residue Cys3. Beta stranded transmembrane passes span Phe70–Val86, Ser98–Ser116, Gly162–Ala179, and Ala187–Phe203. Positions Pro244–Ser259 are C-terminal region.

Belongs to the bacterial gasdermin family. As to quaternary structure, monomer in solution. Forms large, homooligomeric ring-shaped pores when inserted in membranes. Post-translationally, palmitoylation helps stabilize the inactive state; may self palmitoylate. Palmitoylation plays a significant role in pore formation.

Its subcellular location is the cytoplasm. The protein localises to the cell inner membrane. The full-length protein before cleavage is inactive: intramolecular interactions between the N-terminal domain and the C-terminal region as well as the lipid modification, mediate autoinhibition. The pyroptosis-like-inducing activity is carried by the released N-terminal domain (Gasdermin bGSDM, N-terminus). Its function is as follows. Precursor of a pore-forming protein involved in defense against bacteriophages. Expression of bGSDM and the neighboring protease gene (Ga0098714_109514) is toxic in E.coli on solid medium. Cleavage of this precursor by its dedicated protease releases the active moiety (gasdermin bGSDM, N-terminus) which inserts into membranes, forming pores and triggering cell death. In terms of biological role, pore-forming protein that causes membrane permeabilization via a pyroptosis-like activity. Makes ring-like pores when released. The protein is Gasdermin bGSDM of Bradyrhizobium tropiciagri.